Reading from the N-terminus, the 240-residue chain is Lactate utilization protein C (240 aa).

The protein belongs to the LutC/YkgG family.

Its function is as follows. Is involved in L-lactate degradation and allows cells to grow with lactate as the sole carbon source. The polypeptide is Lactate utilization protein C (Geobacillus kaustophilus (strain HTA426)).